The sequence spans 375 residues: Growth/differentiation factor 8 (375 aa).

Positions 1–18 (MQKLQIFVYIYLFVLIVA) are cleaved as a signal peptide. Positions 19 to 266 (GPVDLNENSE…VTDTPKRSRR (248 aa)) are excised as a propeptide. 2 N-linked (GlcNAc...) asparagine glycosylation sites follow: Asn48 and Asn71. 4 disulfide bridges follow: Cys272/Cys282, Cys281/Cys340, Cys309/Cys372, and Cys313/Cys374.

Belongs to the TGF-beta family. As to quaternary structure, homodimer; disulfide-linked. Interacts with WFIKKN2, leading to inhibit its activity. Interacts with FSTL3. In terms of processing, synthesized as large precursor molecule that undergoes proteolytic cleavage to generate an N-terminal propeptide and a disulfide linked C-terminal dimer, which is the biologically active molecule. The circulating form consists of a latent complex of the C-terminal dimer and other proteins, including its propeptide, which maintain the C-terminal dimer in a latent, inactive state. Ligand activation requires additional cleavage of the prodomain by a tolloid-like metalloproteinase.

Its subcellular location is the secreted. Acts specifically as a negative regulator of skeletal muscle growth. The chain is Growth/differentiation factor 8 (MSTN) from Aepyceros melampus (Impala).